The following is a 233-amino-acid chain: Phosphatidylserine decarboxylase proenzyme (233 aa).

S190 functions as the Schiff-base intermediate with substrate; via pyruvic acid in the catalytic mechanism. Position 190 is a pyruvic acid (Ser); by autocatalysis (S190).

The protein belongs to the phosphatidylserine decarboxylase family. PSD-A subfamily. As to quaternary structure, heterodimer of a large membrane-associated beta subunit and a small pyruvoyl-containing alpha subunit. It depends on pyruvate as a cofactor. In terms of processing, is synthesized initially as an inactive proenzyme. Formation of the active enzyme involves a self-maturation process in which the active site pyruvoyl group is generated from an internal serine residue via an autocatalytic post-translational modification. Two non-identical subunits are generated from the proenzyme in this reaction, and the pyruvate is formed at the N-terminus of the alpha chain, which is derived from the carboxyl end of the proenzyme. The post-translation cleavage follows an unusual pathway, termed non-hydrolytic serinolysis, in which the side chain hydroxyl group of the serine supplies its oxygen atom to form the C-terminus of the beta chain, while the remainder of the serine residue undergoes an oxidative deamination to produce ammonia and the pyruvoyl prosthetic group on the alpha chain.

It localises to the cell membrane. The catalysed reaction is a 1,2-diacyl-sn-glycero-3-phospho-L-serine + H(+) = a 1,2-diacyl-sn-glycero-3-phosphoethanolamine + CO2. It participates in phospholipid metabolism; phosphatidylethanolamine biosynthesis; phosphatidylethanolamine from CDP-diacylglycerol: step 2/2. In terms of biological role, catalyzes the formation of phosphatidylethanolamine (PtdEtn) from phosphatidylserine (PtdSer). The protein is Phosphatidylserine decarboxylase proenzyme of Bartonella quintana (strain Toulouse) (Rochalimaea quintana).